The sequence spans 135 residues: BolA-like protein 1 (135 aa).

The residue at position 81 (Ser-81) is a Phosphoserine. Residues 114–135 (WKENPQLDTSPACLGGSKKSRN) form a disordered region.

Belongs to the BolA/IbaG family. As to quaternary structure, interacts with GLRX5.

The protein resides in the mitochondrion. Its function is as follows. Acts as a mitochondrial iron-sulfur (Fe-S) cluster assembly factor that facilitates (Fe-S) cluster insertion into a subset of mitochondrial proteins. Probably acts together with the monothiol glutaredoxin GLRX5. May protect cells against oxidative stress. The protein is BolA-like protein 1 (BOLA1) of Bos taurus (Bovine).